Reading from the N-terminus, the 100-residue chain is Aspartyl/glutamyl-tRNA(Asn/Gln) amidotransferase subunit C (100 aa).

This sequence belongs to the GatC family. Heterotrimer of A, B and C subunits.

It catalyses the reaction L-glutamyl-tRNA(Gln) + L-glutamine + ATP + H2O = L-glutaminyl-tRNA(Gln) + L-glutamate + ADP + phosphate + H(+). The catalysed reaction is L-aspartyl-tRNA(Asn) + L-glutamine + ATP + H2O = L-asparaginyl-tRNA(Asn) + L-glutamate + ADP + phosphate + 2 H(+). Allows the formation of correctly charged Asn-tRNA(Asn) or Gln-tRNA(Gln) through the transamidation of misacylated Asp-tRNA(Asn) or Glu-tRNA(Gln) in organisms which lack either or both of asparaginyl-tRNA or glutaminyl-tRNA synthetases. The reaction takes place in the presence of glutamine and ATP through an activated phospho-Asp-tRNA(Asn) or phospho-Glu-tRNA(Gln). The chain is Aspartyl/glutamyl-tRNA(Asn/Gln) amidotransferase subunit C from Streptococcus agalactiae serotype Ia (strain ATCC 27591 / A909 / CDC SS700).